A 483-amino-acid chain; its full sequence is MVLNLDTENRKMQDGNNDDDFDLEVQIPNSIFEKLKSIEALKARESPMCVSGKDDSIPTCDQNSTPGMITQRSCVYGGARVVLMPITDAVHLVHGPIGCAACTWDIRGSKSTGDKLYKNGFSTDLQEKDIVFGGEKKLYESILEVNKLYHPGAIFVYSTCVVGLIGDDLKAVCRQAQEATGCRVIPVQSEGFKSFNKTAGHKLACDAMLDYVIGTEEPEEEHPYSINIIGEFNVAGDLWGIIPLYEKMGVKVHTAITGDSTVAKVASAHRSKLNIVQCPKSSNYLAAQMDKKYGIPSFKVNFFGLDETTKSLRAVAEFFGDEEMIKRTEELIKSEIKNLRDEISEYQKDLSGRTVAIYSGAHKSWALVSAFGELDMEIIMSGTQNGKPEDYQQIRDHVCEGTLIVDDASSMELVQLLKEYKPDILISGAKEKYLSLKSGIPHCDFNHDRITAFSGYQGFINFARVVHTAVMTPIWRLSRKMMI.

The segment at 1–20 is disordered; it reads MVLNLDTENRKMQDGNNDDD.

Belongs to the NifD/NifK/NifE/NifN family.

The protein operates within cofactor biosynthesis; Fe-Mo cofactor biosynthesis. Its function is as follows. This protein may play a role in the biosynthesis of the prosthetic group of nitrogenase (FeMo cofactor). This is Nitrogenase iron-molybdenum cofactor biosynthesis protein NifE (nifE) from Methanococcus maripaludis (Methanococcus deltae).